The sequence spans 640 residues: Calpain-5 (640 aa).

A Calpain catalytic domain is found at leucine 26–isoleucine 343. Catalysis depends on residues cysteine 81, histidine 252, and asparagine 284. A domain III region spans residues asparagine 344–arginine 496. Residues arginine 499–glycine 617 enclose the C2 domain.

The protein belongs to the peptidase C2 family.

Functionally, calcium-regulated non-lysosomal thiol-protease. In Rattus norvegicus (Rat), this protein is Calpain-5 (Capn5).